We begin with the raw amino-acid sequence, 867 residues long: Coiled-coil domain-containing protein 178 (867 aa).

Coiled coils occupy residues 153-204 (DEKC…KIDS), 233-414 (WHLE…ENQY), 445-470 (ACTK…TNES), and 662-696 (MIFY…KNKF).

The chain is Coiled-coil domain-containing protein 178 (CCDC178) from Homo sapiens (Human).